Reading from the N-terminus, the 201-residue chain is ATP-dependent Clp protease proteolytic subunit (201 aa).

Residue Ser-98 is the Nucleophile of the active site. His-123 is an active-site residue.

The protein belongs to the peptidase S14 family. As to quaternary structure, fourteen ClpP subunits assemble into 2 heptameric rings which stack back to back to give a disk-like structure with a central cavity, resembling the structure of eukaryotic proteasomes.

Its subcellular location is the cytoplasm. The enzyme catalyses Hydrolysis of proteins to small peptides in the presence of ATP and magnesium. alpha-casein is the usual test substrate. In the absence of ATP, only oligopeptides shorter than five residues are hydrolyzed (such as succinyl-Leu-Tyr-|-NHMec, and Leu-Tyr-Leu-|-Tyr-Trp, in which cleavage of the -Tyr-|-Leu- and -Tyr-|-Trp bonds also occurs).. In terms of biological role, cleaves peptides in various proteins in a process that requires ATP hydrolysis. Has a chymotrypsin-like activity. Plays a major role in the degradation of misfolded proteins. This Rickettsia felis (strain ATCC VR-1525 / URRWXCal2) (Rickettsia azadi) protein is ATP-dependent Clp protease proteolytic subunit.